Consider the following 501-residue polypeptide: G protein-activated inward rectifier potassium channel 1 (501 aa).

The tract at residues 1 to 40 (MSALRRKFGDDYQVVTTSSSGSGLQPQGPGQGPQQQLVPK) is disordered. Over 1–80 (MSALRRKFGD…LFTTLVDLKW (80 aa)) the chain is Cytoplasmic. Residues 18 to 37 (SSSGSGLQPQGPGQGPQQQL) show a composition bias toward low complexity. The helical transmembrane segment at 81-105 (RWNLFIFILTYTVAWLFMASMWWVI) threads the bilayer. Over 106-129 (AYTRGDLNKAHVGNYTPCVANVYN) the chain is Extracellular. Asn-119 is a glycosylation site (N-linked (GlcNAc...) asparagine). Positions 130–141 (FPSAFLFFIETE) form an intramembrane region, helical; Pore-forming. The pore-forming intramembrane region spans 142 to 148 (ATIGYGY). The Selectivity filter signature appears at 143 to 148 (TIGYGY). Topologically, residues 149–157 (RYITDKCPE) are extracellular. Residues 158-179 (GIILFLFQSILGSIVDAFLIGC) form a helical membrane-spanning segment. The Cytoplasmic segment spans residues 180 to 501 (MFIKMSQPKK…LRKMNSDRFT (322 aa)). Residues 182–209 (IKMSQPKKRAETLMFSEHAVISMRDGKL) form a polyphosphoinositide (PIP2)-binding region. 2 positions are modified to phosphoserine: Ser-385 and Ser-424.

This sequence belongs to the inward rectifier-type potassium channel (TC 1.A.2.1) family. KCNJ3 subfamily. In terms of assembly, associates with KCNJ5/GIRK4 or KCNJ6/GIRK2 or KCNJ9/GIRK3 to form a G-protein activated heteromultimer pore-forming unit. The resulting inward current is much larger.

Its subcellular location is the membrane. It carries out the reaction K(+)(in) = K(+)(out). With respect to regulation, heteromultimer composed of KCNJ3/GIRK1 and KCNJ5/GIRK4 is activated by phosphatidylinositol 4,5 biphosphate (PtdIns(4,5)P2). Functionally, inward rectifier potassium channels are characterized by a greater tendency to allow potassium to flow into the cell rather than out of it. Their voltage dependence is regulated by the concentration of extracellular potassium; as external potassium is raised, the voltage range of the channel opening shifts to more positive voltages. The inward rectification is mainly due to the blockage of outward current by internal magnesium. This potassium channel is controlled by G proteins. This receptor plays a crucial role in regulating the heartbeat. The polypeptide is G protein-activated inward rectifier potassium channel 1 (KCNJ3) (Bos taurus (Bovine)).